The primary structure comprises 287 residues: Ribosomal RNA small subunit methyltransferase A (287 aa).

Residues asparagine 18, leucine 20, glycine 45, glutamate 66, aspartate 91, and asparagine 118 each contribute to the S-adenosyl-L-methionine site.

The protein belongs to the class I-like SAM-binding methyltransferase superfamily. rRNA adenine N(6)-methyltransferase family. RsmA subfamily.

Its subcellular location is the cytoplasm. The catalysed reaction is adenosine(1518)/adenosine(1519) in 16S rRNA + 4 S-adenosyl-L-methionine = N(6)-dimethyladenosine(1518)/N(6)-dimethyladenosine(1519) in 16S rRNA + 4 S-adenosyl-L-homocysteine + 4 H(+). Its function is as follows. Specifically dimethylates two adjacent adenosines (A1518 and A1519) in the loop of a conserved hairpin near the 3'-end of 16S rRNA in the 30S particle. May play a critical role in biogenesis of 30S subunits. In Haemophilus influenzae (strain ATCC 51907 / DSM 11121 / KW20 / Rd), this protein is Ribosomal RNA small subunit methyltransferase A.